Here is an 87-residue protein sequence, read N- to C-terminus: Small ribosomal subunit protein bS20 (87 aa).

Residues 1-22 form a disordered region; it reads MANSAQARKRARQAVKQRAHNA. Over residues 7-19 the composition is skewed to basic residues; that stretch reads ARKRARQAVKQRA.

Belongs to the bacterial ribosomal protein bS20 family.

Functionally, binds directly to 16S ribosomal RNA. The chain is Small ribosomal subunit protein bS20 from Methylobacillus flagellatus (strain ATCC 51484 / DSM 6875 / VKM B-1610 / KT).